Consider the following 188-residue polypeptide: Adenine phosphoribosyltransferase (188 aa).

134–138 (ATGGS) contributes to the AMP binding site.

This sequence belongs to the purine/pyrimidine phosphoribosyltransferase family. Homodimer. Mg(2+) is required as a cofactor.

Its subcellular location is the cytoplasm. It is found in the nucleus. The catalysed reaction is AMP + diphosphate = 5-phospho-alpha-D-ribose 1-diphosphate + adenine. Its pathway is purine metabolism; AMP biosynthesis via salvage pathway; AMP from adenine: step 1/1. In terms of biological role, catalyzes a salvage reaction resulting in the formation of AMP, that is energically less costly than de novo synthesis. This chain is Adenine phosphoribosyltransferase (APT1), found in Candida albicans (strain SC5314 / ATCC MYA-2876) (Yeast).